The chain runs to 248 residues: Uridylate kinase (248 aa).

Position 13-16 (13-16 (KLSG)) interacts with ATP. A UMP-binding site is contributed by Gly55. The ATP site is built by Gly56 and Arg60. Residues Asp75 and 136–143 (TGNPYFTT) contribute to the UMP site. Positions 163, 169, and 172 each coordinate ATP.

It belongs to the UMP kinase family. Homohexamer.

It localises to the cytoplasm. The enzyme catalyses UMP + ATP = UDP + ADP. It functions in the pathway pyrimidine metabolism; CTP biosynthesis via de novo pathway; UDP from UMP (UMPK route): step 1/1. With respect to regulation, inhibited by UTP. Functionally, catalyzes the reversible phosphorylation of UMP to UDP. This Leptospira interrogans serogroup Icterohaemorrhagiae serovar copenhageni (strain Fiocruz L1-130) protein is Uridylate kinase.